The chain runs to 522 residues: Gypsy retrotransposon integrase-like protein 1 (522 aa).

The 158-residue stretch at 135 to 292 (KVENPWSLVT…TPYFQMFSRN (158 aa)) folds into the Integrase catalytic domain. A Phosphoserine modification is found at Ser-502.

As to expression, widely expressed. Also found in tumors originating from parathyroid gland, colon, stomach, bladder, uterus and prostate.

The polypeptide is Gypsy retrotransposon integrase-like protein 1 (GIN1) (Homo sapiens (Human)).